The primary structure comprises 1312 residues: DNA repair protein RAD50 (1312 aa).

ATP contacts are provided by Arg13, Asn36, Gly37, Gly39, Lys40, Thr41, Thr42, Ile65, Asp67, and Gln158. Residue Thr41 coordinates Mg(2+). Position 158 (Gln158) interacts with Mg(2+). Coiled-coil stretches lie at residues 185-347 (TKAL…LIRR) and 403-558 (QDLT…LQND). Position 469 is a phosphoserine (Ser469). Phosphothreonine is present on Thr568. Residues 640–678 (DCTIDEYNDVLEETELSYKTALENLKMHQTTLEFNRKAL) are a coiled coil. In terms of domain architecture, Zinc-hook spans 640–741 (DCTIDEYNDV…SLRLLEKHII (102 aa)). Residues Cys687 and Cys690 each coordinate Zn(2+). Coiled-coil stretches lie at residues 712–741 (DANFEKTLKDTVQNEKEYLHSLRLLEKHII) and 787–1108 (LAES…DIEK).

The protein belongs to the SMC family. RAD50 subfamily. As to quaternary structure, component of the MRN complex composed of two heterodimers RAD50 and MRE11 associated with a single XRS2. The MRN complexes dimerize on DNA to form joined MRN-MRN oligomers required for DNA double-strand break repair. The cofactor is Zn(2+).

It localises to the nucleus. Its subcellular location is the chromosome. It catalyses the reaction ATP + H2O = ADP + phosphate + H(+). Its function is as follows. Component of the MRN complex, which plays a central role in double-strand break (DSB) repair, DNA recombination, maintenance of telomere integrity and meiosis. The MRN complex is involved in the repair of DNA double-strand breaks (DSBs) via homologous recombination (HR), an error-free mechanism which primarily occurs during S and G2 phases. The complex (1) mediates the end resection of damaged DNA, which generates proper single-stranded DNA, a key initial steps in HR, and is (2) required for the recruitment of other repair factors and efficient activation of TEL1/ATM and ATR upon DNA damage. The MRN complex possesses single-strand endonuclease activity and double-strand-specific 3'-5' exonuclease activity, which are provided by MRE11, to initiate end resection, which is required for single-strand invasion and recombination. Within the complex, RAD50 is both required to bind DNA ends and hold them in close proximity and regulate the activity of MRE11. RAD50 provides an ATP-dependent control of MRE11 by positioning DNA ends into the MRE11 active site: ATP-binding induces a large structural change from an open form with accessible MRE11 nuclease sites into a closed form. The MRN complex is also required for the processing of R-loops. The protein is DNA repair protein RAD50 of Saccharomyces cerevisiae (strain ATCC 204508 / S288c) (Baker's yeast).